We begin with the raw amino-acid sequence, 366 residues long: Transcription factor bHLH74 (366 aa).

A compositionally biased stretch (gly residues) spans 1-11; that stretch reads MGGESNEGGEM. Disordered regions lie at residues 1–20 and 123–201; these read MGGE…DDES and GESS…APKE. Composition is skewed to basic and acidic residues over residues 123 to 134 and 159 to 170; these read GESSHEDHHQVS and KAVEEFQEDPQR. Residues 212–262 enclose the bHLH domain; that stretch reads QATNSHSLAERVRREKISERMRLLQELVPGCNKITGKAVMLDEIINYVQSL.

In terms of assembly, homodimer. Interacts with IBH1. Binds reversibly to CRY2 after blue light illumination. In terms of tissue distribution, expressed constitutively in roots, leaves, stems, and flowers.

The protein localises to the nucleus. In terms of biological role, transcriptional activator involved in cell elongation. Regulates the expression of a subset of genes involved in cell expansion by binding to the G-box motif. Binds to chromatin DNA of the FT gene and promotes its expression, and thus triggers flowering in response to blue light. In Arabidopsis thaliana (Mouse-ear cress), this protein is Transcription factor bHLH74 (BHLH74).